A 116-amino-acid polypeptide reads, in one-letter code: Ly-6/neurotoxin-like protein 1 (116 aa).

An N-terminal signal peptide occupies residues methionine 1–alanine 20. Residues leucine 21–leucine 104 enclose the UPAR/Ly6 domain. Cystine bridges form between cysteine 23-cysteine 46, cysteine 26-cysteine 33, cysteine 39-cysteine 64, cysteine 68-cysteine 85, and cysteine 86-cysteine 91. A lipid anchor (GPI-anchor amidated asparagine) is attached at asparagine 92. Positions glycine 93–leucine 116 are cleaved as a propeptide — removed in mature form.

Interacts with nAChRs containing alpha-4:beta-2 (CHRNA4:CHRNB2) and alpha-7 (CHRNA7) subunits. Interacts with CHRNA4 probably in the endoplasmic reticulum prior to nAChR pentameric assembly. Interacts with KCNA2/Potassium voltage-gated channel subfamily A member 2. As to expression, expressed in neurons of multiple regions in the CNS, including the cerebral cortex, thalamus, substantia nigra, cerebellum, amygdala and hippocampus. Also expressed in kidney, heart and thymus, but at lower levels than in the brain. Expressed in the primary visual cortex (V1) and the lateral geniculate nucleus (at protein level).

The protein resides in the cell membrane. It is found in the cell projection. Its subcellular location is the dendrite. The protein localises to the endoplasmic reticulum. Functionally, acts in different tissues through interaction to nicotinic acetylcholine receptors (nAChRs). The proposed role as modulator of nAChR activity seems to be dependent on the nAChR subtype and stoichiometry, and to involve an effect on nAChR trafficking and its cell surface expression, and on single channel properties of the nAChR inserted in the plasma membrane. Modulates functional properties of nicotinic acetylcholine receptors (nAChRs) to prevent excessive excitation, and hence neurodegeneration. Enhances desensitization by increasing both the rate and extent of desensitization of alpha-4:beta-2-containing nAChRs and slowing recovery from desensitization. Promotes large amplitude ACh-evoked currents through alpha-4:beta-2 nAChRs. Is involved in regulation of the nAChR pentameric assembly in the endoplasmic reticulum. Shifts stoichiometry from high sensitivity alpha-4(2):beta-2(3) to low sensitivity alpha-4(3):beta-2(2) nAChR. In vitro modulates alpha-3:beta-4-containing nAChRs. Reduces cell surface expression of (alpha-3:beta-4)(2):beta-4 and (alpha-3:beta-4)(2):alpha-5 nAChRs suggesting an interaction with nAChR alpha-3(-):(+)beta-4 subunit interfaces and an allosteric mode. Corresponding single channel effects characterized by decreased unitary conductance, altered burst proportions and enhanced desensitization/inactivation seem to depend on nAChR alpha:alpha subunit interfaces and are greater in (alpha-3:beta-2)(2):alpha-3 when compared to (alpha-3:beta-2)(2):alpha-5 nAChRs. Prevents plasticity in the primary visual cortex late in life. This chain is Ly-6/neurotoxin-like protein 1, found in Mus musculus (Mouse).